Reading from the N-terminus, the 491-residue chain is MNAAAEAEFNILLATDSYKVTHYKQYPPNTSKVYSYFECREKKTENSKVRKVKYEETVFYGLQYILNKYLKGKVVTKEKIQEAKEVYREHFQDDVFNERGWNYILEKYDGHLPIEVKAVPEGSVIPRGNVLFTVENTDPECYWLTNWIETILVQSWYPITVATNSREQKKILAKYLLETSGNLDGLEYKLHDFGYRGVSSQETAGIGASAHLVNFKGTDTVAGIALIKKYYGTKDPVPGYSVPAAEHSTITAWGKDHEKDAFEHIVTQFSSVPVSVVSDSYDIYNACEKIWGEDLRHLIVSRSTEAPLIIRPDSGNPLDTVLKVLDILGKKFPVTENSKGYKLLPPYLRVIQGDGVDINTLQEIVEGMKQKKWSIENVSFGSGGALLQKLTRDLLNCSFKCSYVVTNGLGVNVFKDPVADPNKRSKKGRLSLHRTPAGNFVTLEEGKGDLEEYGHDLLHTVFKNGKVTKSYSFDEVRKNAQLNIEQDVAPH.

Met-1 is subject to N-acetylmethionine. At Tyr-188 the chain carries Phosphotyrosine. A diphosphate-binding site is contributed by Arg-196. A beta-nicotinamide D-ribonucleotide-binding site is contributed by Asp-219. 2 residues coordinate diphosphate: His-247 and Arg-311. Residues 311–313 (RPD), 353–354 (GD), Gly-384, and Arg-392 each bind beta-nicotinamide D-ribonucleotide. At Ser-472 the chain carries Phosphoserine.

Belongs to the NAPRTase family. As to quaternary structure, homodimer. Ubiquitously expressed in lymphoid and non-lymphoid tissues.

The protein localises to the nucleus. It localises to the cytoplasm. It is found in the secreted. The enzyme catalyses beta-nicotinamide D-ribonucleotide + diphosphate = 5-phospho-alpha-D-ribose 1-diphosphate + nicotinamide + H(+). It participates in cofactor biosynthesis; NAD(+) biosynthesis; nicotinamide D-ribonucleotide from 5-phospho-alpha-D-ribose 1-diphosphate and nicotinamide: step 1/1. The secreted form behaves both as a cytokine with immunomodulating properties and an adipokine with anti-diabetic properties, it has no enzymatic activity, partly because of lack of activation by ATP, which has a low level in extracellular space and plasma. Catalyzes the condensation of nicotinamide with 5-phosphoribosyl-1-pyrophosphate to yield nicotinamide mononucleotide, an intermediate in the biosynthesis of NAD. It is the rate limiting component in the mammalian NAD biosynthesis pathway. Plays a role in the modulation of circadian clock function. NAMPT-dependent oscillatory production of NAD regulates oscillation of clock target gene expression by releasing the core clock component: CLOCK-BMAL1 heterodimer from NAD-dependent SIRT1-mediated suppression. This is Nicotinamide phosphoribosyltransferase (Nampt) from Mus musculus (Mouse).